Reading from the N-terminus, the 323-residue chain is Aldo-keto reductase family 1 member C1 (323 aa).

NADP(+) contacts are provided by residues 20–24 (GFGTY) and aspartate 50. Tyrosine 24 lines the substrate pocket. Tyrosine 55 acts as the Proton donor in catalysis. Histidine 117 contributes to the substrate binding site. Residues 166-167 (SN), glutamine 190, and 216-222 (YSALGSH) contribute to the NADP(+) site. Substrate is bound by residues histidine 222 and tryptophan 227. 270–280 (KSYNEQRIRQN) is an NADP(+) binding site.

This sequence belongs to the aldo/keto reductase family. Monomer.

It localises to the cytoplasm. The protein localises to the cytosol. The enzyme catalyses a 3alpha-hydroxysteroid + NADP(+) = a 3-oxosteroid + NADPH + H(+). The catalysed reaction is a 3alpha-hydroxysteroid + NAD(+) = a 3-oxosteroid + NADH + H(+). It carries out the reaction (17R,20S)-17,20-dihydroxypregn-4-en-3-one + NADP(+) = 17alpha-hydroxyprogesterone + NADPH + H(+). It catalyses the reaction (17R,20S)-17,20-dihydroxypregn-4-en-3-one + NAD(+) = 17alpha-hydroxyprogesterone + NADH + H(+). The enzyme catalyses (20S)-hydroxypregn-4-en-3-one + NADP(+) = progesterone + NADPH + H(+). The catalysed reaction is (20S)-hydroxypregn-4-en-3-one + NAD(+) = progesterone + NADH + H(+). It carries out the reaction (1R,2R)-1,2-dihydrobenzene-1,2-diol + NADP(+) = catechol + NADPH + H(+). It catalyses the reaction (S)-indan-1-ol + NAD(+) = indan-1-one + NADH + H(+). The enzyme catalyses (S)-indan-1-ol + NADP(+) = indan-1-one + NADPH + H(+). The catalysed reaction is 5alpha-androstane-3alpha,17beta-diol + NADP(+) = 17beta-hydroxy-5alpha-androstan-3-one + NADPH + H(+). It carries out the reaction 5alpha-androstane-3beta,17beta-diol + NADP(+) = 17beta-hydroxy-5alpha-androstan-3-one + NADPH + H(+). It catalyses the reaction 5alpha-androstane-3alpha,17beta-diol + NAD(+) = 17beta-hydroxy-5alpha-androstan-3-one + NADH + H(+). The enzyme catalyses 17beta-hydroxy-5alpha-androstan-3-one + NADP(+) = 5alpha-androstan-3,17-dione + NADPH + H(+). The catalysed reaction is androsterone + NADP(+) = 5alpha-androstan-3,17-dione + NADPH + H(+). It carries out the reaction androsterone + NADPH + H(+) = 5alpha-androstane-3alpha,17beta-diol + NADP(+). It catalyses the reaction 5alpha-androstane-3alpha,17beta-diol + NAD(+) = androsterone + NADH + H(+). The enzyme catalyses 17beta-estradiol + NADP(+) = estrone + NADPH + H(+). The catalysed reaction is 17beta-estradiol + NAD(+) = estrone + NADH + H(+). It carries out the reaction testosterone + NADP(+) = androst-4-ene-3,17-dione + NADPH + H(+). It catalyses the reaction 20alpha-hydroxy-5beta-pregnan-3-one + NADP(+) = 5beta-pregnan-3,20-dione + NADPH + H(+). The enzyme catalyses 3beta-hydroxy-5beta-pregnane-20-one + NADP(+) = 5beta-pregnan-3,20-dione + NADPH + H(+). The catalysed reaction is 3beta-hydroxy-5beta-pregnane-20-one + NADPH + H(+) = 3beta,20alpha-dihydroxy-5beta-pregnane + NADP(+). It carries out the reaction (3beta,5alpha,17beta)-3-hydroxyandrostan-17-yl sulfate + NADP(+) = 5alpha-dihydrotestosterone sulfate + NADPH + H(+). It participates in steroid metabolism. Functionally, cytosolic aldo-keto reductase that catalyzes the NADH and NADPH-dependent reduction of ketosteroids to hydroxysteroids. Most probably acts as a reductase in vivo since the oxidase activity measured in vitro is inhibited by physiological concentrations of NADPH. Displays a broad positional specificity acting on positions 3, 17 and 20 of steroids and regulates the metabolism of hormones like estrogens and androgens. May also reduce conjugated steroids such as 5alpha-dihydrotestosterone sulfate. Displays affinity for bile acids. The chain is Aldo-keto reductase family 1 member C1 (AKR1C1) from Pongo abelii (Sumatran orangutan).